We begin with the raw amino-acid sequence, 435 residues long: Nuclear receptor subfamily 6 group A member 1 (435 aa).

The segment at residues 11 to 86 (QRACLICGDR…MGMNRKAIRE (76 aa)) is a DNA-binding region (nuclear receptor). 2 NR C4-type zinc fingers span residues 14 to 34 (CLIC…CEGC) and 50 to 69 (CSRD…CQYC). The interval 84–157 (IREDGMPGGR…VSTPSSSRSM (74 aa)) is disordered. Over residues 121 to 141 (NTSWSNNGDSDHSSPGNGVSE) the composition is skewed to polar residues. Residues 142–156 (SNQPSPVSTPSSSRS) are compositionally biased toward low complexity. Residues 204–435 (QSHTLINQLL…HSCKTSLTKE (232 aa)) form the NR LBD domain.

It belongs to the nuclear hormone receptor family. NR6 subfamily. Homodimer.

Its subcellular location is the cytoplasm. It localises to the nucleus. In terms of biological role, probable orphan nuclear receptor. Binds to a response element containing repeats of the motif 5'-AGGTCA-3'. Required for anterior-posterior patterning during organogenesis. Acts with chordin to play a role in patterning the midbrain-hindbrain. Isoform Em is required for integrin-mediated cell matrix interaction during neurulation and for the morphogenetic movements leading to formation of the neural tube. Also mediates the effect of retinoic acid on primary neurogenesis. The chain is Nuclear receptor subfamily 6 group A member 1 from Xenopus tropicalis (Western clawed frog).